The primary structure comprises 500 residues: Abscisic acid 8'-hydroxylase 3 (500 aa).

Residues 3–23 form a helical membrane-spanning segment; the sequence is ASFVIVIVISFFISLAFMCYV. C426 serves as a coordination point for heme.

It belongs to the cytochrome P450 family. Heme is required as a cofactor.

It is found in the membrane. The enzyme catalyses 2-cis-(+)-abscisate + reduced [NADPH--hemoprotein reductase] + O2 = (+)-8'-hydroxyabscisate + oxidized [NADPH--hemoprotein reductase] + H2O + H(+). It participates in plant hormone degradation; abscisic acid degradation. In terms of biological role, involved in the oxidative degradation of abscisic acid. The sequence is that of Abscisic acid 8'-hydroxylase 3 (CYP707A7) from Oryza sativa subsp. indica (Rice).